We begin with the raw amino-acid sequence, 122 residues long: NADH-quinone oxidoreductase subunit A (122 aa).

Helical transmembrane passes span 10-30 (MIVL…LTLG), 66-86 (IFAL…PWAV), and 91-111 (LGLF…VGLA).

The protein belongs to the complex I subunit 3 family. NDH-1 is composed of 14 different subunits. Subunits NuoA, H, J, K, L, M, N constitute the membrane sector of the complex.

It localises to the cell membrane. The catalysed reaction is a quinone + NADH + 5 H(+)(in) = a quinol + NAD(+) + 4 H(+)(out). Its function is as follows. NDH-1 shuttles electrons from NADH, via FMN and iron-sulfur (Fe-S) centers, to quinones in the respiratory chain. The immediate electron acceptor for the enzyme in this species is believed to be a menaquinone. Couples the redox reaction to proton translocation (for every two electrons transferred, four hydrogen ions are translocated across the cytoplasmic membrane), and thus conserves the redox energy in a proton gradient. This chain is NADH-quinone oxidoreductase subunit A, found in Bacillus cereus (strain ATCC 14579 / DSM 31 / CCUG 7414 / JCM 2152 / NBRC 15305 / NCIMB 9373 / NCTC 2599 / NRRL B-3711).